Consider the following 483-residue polypeptide: Endoplasmic reticulum lectin 1 (483 aa).

Positions 1–33 (MEEGGGGVRSLVPGGPVLLVLCGLLEASGGGRA) are cleaved as a signal peptide. MRH domains are found at residues 111 to 246 (SSCS…LCSH) and 342 to 469 (SYCF…ICKI). Cys-113 and Cys-126 are disulfide-bonded. Residue Asn-195 is glycosylated (N-linked (GlcNAc...) asparagine). Intrachain disulfides connect Cys-199–Cys-232, Cys-215–Cys-244, Cys-344–Cys-357, Cys-421–Cys-455, and Cys-436–Cys-467.

In terms of assembly, may form a complex with OS9, HSPA5, SYVN1, and SEL1L with which it interacts directly. Interacts (via PRKCSH 2 domain) with KREMEN2 (when glycosylated). Interacts with HSPA5. Isoform 1 and isoform 2 are N-glycosylated.

It is found in the endoplasmic reticulum lumen. Its function is as follows. Probable lectin that binds selectively to improperly folded lumenal proteins. May function in endoplasmic reticulum quality control and endoplasmic reticulum-associated degradation (ERAD) of both non-glycosylated proteins and glycoproteins. The sequence is that of Endoplasmic reticulum lectin 1 (ERLEC1) from Homo sapiens (Human).